The chain runs to 501 residues: MLLIWLLLLTIVTLNFWLRHKYDYFRSRGIPHLPPSSWSPMGNLGQLLFLRISFGDLFRQLYADPRNGQAKIVGFFIFQTPALMVRDPELIRQVLIKNFNNFLNRFESADAGDPMGALTLPLAKYHHWKESRQCMSQLFTSGRMRDVMYSQMLDVASDLEQYLNRKLGDRLERVLPLGRMCQLYTTDVTGNLFYSLNVGGLRRGRSELITKTKELFNTNPRKVLDFMSVFFLPKWTGVLKPKVFTEDYARYMRHLVDDHHEPTKGDLINQLQHFQLSRSSNHYSQHPDFVASQAGIILLAGFETSSALMGFTLYELAKAPDIQERLRSELREAFISTATLSYDTLMTLPYLKMVCLEALRLYPAAAFVNRECTSSASEGFSLQPHVDFIVPPGMPAYISILGLHRDERFWPEPCVFDPERFGPERSRHIHPMTYIPFGAGPHGCIGSRLGVLQLKLGIVHILKQYWVETCERTVSEIRFNPKSFMLESENEIYLRFCRSSL.

Cys-444 contacts heme.

It belongs to the cytochrome P450 family. Heme is required as a cofactor.

Its subcellular location is the endoplasmic reticulum membrane. It is found in the microsome membrane. May be involved in the metabolism of insect hormones and in the breakdown of synthetic insecticides. The chain is Probable cytochrome P450 6t3 (Cyp6t3) from Drosophila melanogaster (Fruit fly).